Here is a 466-residue protein sequence, read N- to C-terminus: Cysteine--tRNA ligase (466 aa).

Residue C30 coordinates Zn(2+). The short motif at 32–42 (PTVYNYIHIGN) is the 'HIGH' region element. Zn(2+) is bound by residues C210, H235, and E239. The 'KMSKS' region motif lies at 267–271 (KMSKS). K270 provides a ligand contact to ATP. S271 bears the Phosphoserine mark.

Belongs to the class-I aminoacyl-tRNA synthetase family. Monomer. Requires Zn(2+) as cofactor.

It is found in the cytoplasm. The enzyme catalyses tRNA(Cys) + L-cysteine + ATP = L-cysteinyl-tRNA(Cys) + AMP + diphosphate. This is Cysteine--tRNA ligase from Geobacillus sp. (strain WCH70).